The primary structure comprises 237 residues: Derlin-2 (237 aa).

Topologically, residues 1–20 (MNGVVAALEEMPPVTRFYTG) are cytoplasmic. Residues 21-41 (ACVLLTTAVHLEFVTPFHLYF) form a helical membrane-spanning segment. The Lumenal segment spans residues 42–54 (NWELIIRKYQFWR). The helical transmembrane segment at 55 to 75 (LITSFCFFGSFGFSFLFNMIF) threads the bilayer. Residues 76–97 (TYRYCMMLEEGSFRGRRADFVY) lie on the Cytoplasmic side of the membrane. A helical membrane pass occupies residues 98–118 (MFLFGAVLMILSGIFVQILFL). Over 119-166 (GQAFTIMLVYIWSRRNPMIQMNFFGVLTFTAPYLPWVLLLFSLLLGNN) the chain is Lumenal. Residues 167–187 (AVVDFMGIACGHIYFFLEDVF) form a helical membrane-spanning segment. Residues 188–237 (PFQEHGKRFLKTPQWLVYLFDERRPEPLPEDERPGGFEWGDEQPEQEQHD) lie on the Cytoplasmic side of the membrane. The span at 212 to 222 (PEPLPEDERPG) shows a compositional bias: basic and acidic residues. Residues 212-237 (PEPLPEDERPGGFEWGDEQPEQEQHD) form a disordered region. Positions 226 to 237 (WGDEQPEQEQHD) are enriched in acidic residues.

The protein belongs to the derlin family.

It localises to the endoplasmic reticulum membrane. May be required for the degradation process of some specific misfolded endoplasmic reticulum (ER) luminal proteins. Participates in the transfer of misfolded proteins from the ER to the cytosol, where they are destroyed by the proteasome in a ubiquitin-dependent manner. Its precise function remains unclear, but its ability to complement der1 mutations in C.cerevisiae, suggests a similar function in the degradation of ER misfolded proteins. This is Derlin-2 from Caenorhabditis elegans.